Here is a 246-residue protein sequence, read N- to C-terminus: 1-(5-phosphoribosyl)-5-[(5-phosphoribosylamino)methylideneamino] imidazole-4-carboxamide isomerase (246 aa).

The active-site Proton acceptor is the D7. The active-site Proton donor is D130.

Belongs to the HisA/HisF family.

The protein resides in the cytoplasm. The enzyme catalyses 1-(5-phospho-beta-D-ribosyl)-5-[(5-phospho-beta-D-ribosylamino)methylideneamino]imidazole-4-carboxamide = 5-[(5-phospho-1-deoxy-D-ribulos-1-ylimino)methylamino]-1-(5-phospho-beta-D-ribosyl)imidazole-4-carboxamide. The protein operates within amino-acid biosynthesis; L-histidine biosynthesis; L-histidine from 5-phospho-alpha-D-ribose 1-diphosphate: step 4/9. The chain is 1-(5-phosphoribosyl)-5-[(5-phosphoribosylamino)methylideneamino] imidazole-4-carboxamide isomerase from Blochmanniella pennsylvanica (strain BPEN).